Here is a 482-residue protein sequence, read N- to C-terminus: tRNA sulfurtransferase (482 aa).

The region spanning Leu-61–Arg-165 is the THUMP domain. ATP-binding positions include Leu-183–Ile-184, Lys-265, Gly-287, and Gln-296. Cys-344 and Cys-456 are joined by a disulfide. In terms of domain architecture, Rhodanese spans Phe-404 to Pro-482. The active-site Cysteine persulfide intermediate is Cys-456.

The protein belongs to the ThiI family.

Its subcellular location is the cytoplasm. The enzyme catalyses [ThiI sulfur-carrier protein]-S-sulfanyl-L-cysteine + a uridine in tRNA + 2 reduced [2Fe-2S]-[ferredoxin] + ATP + H(+) = [ThiI sulfur-carrier protein]-L-cysteine + a 4-thiouridine in tRNA + 2 oxidized [2Fe-2S]-[ferredoxin] + AMP + diphosphate. It catalyses the reaction [ThiS sulfur-carrier protein]-C-terminal Gly-Gly-AMP + S-sulfanyl-L-cysteinyl-[cysteine desulfurase] + AH2 = [ThiS sulfur-carrier protein]-C-terminal-Gly-aminoethanethioate + L-cysteinyl-[cysteine desulfurase] + A + AMP + 2 H(+). The protein operates within cofactor biosynthesis; thiamine diphosphate biosynthesis. Its function is as follows. Catalyzes the ATP-dependent transfer of a sulfur to tRNA to produce 4-thiouridine in position 8 of tRNAs, which functions as a near-UV photosensor. Also catalyzes the transfer of sulfur to the sulfur carrier protein ThiS, forming ThiS-thiocarboxylate. This is a step in the synthesis of thiazole, in the thiamine biosynthesis pathway. The sulfur is donated as persulfide by IscS. This chain is tRNA sulfurtransferase, found in Salmonella typhimurium (strain LT2 / SGSC1412 / ATCC 700720).